A 143-amino-acid polypeptide reads, in one-letter code: Small ribosomal subunit protein uS12 (143 aa).

Proline 62 carries the post-translational modification Hydroxyproline.

Belongs to the universal ribosomal protein uS12 family. As to quaternary structure, component of the 40S small ribosomal subunit.

It is found in the cytoplasm. Its subcellular location is the cytosol. The protein resides in the rough endoplasmic reticulum. The chain is Small ribosomal subunit protein uS12 (rps-23) from Caenorhabditis elegans.